A 313-amino-acid polypeptide reads, in one-letter code: Ribosomal RNA small subunit methyltransferase H (313 aa).

S-adenosyl-L-methionine-binding positions include 35-37 (GGH), Asp-55, Phe-79, Asp-101, and Gln-108. A disordered region spans residues 276–300 (QGGPTLKSVGKMMPPDDEVADNPRA).

Belongs to the methyltransferase superfamily. RsmH family.

It is found in the cytoplasm. It catalyses the reaction cytidine(1402) in 16S rRNA + S-adenosyl-L-methionine = N(4)-methylcytidine(1402) in 16S rRNA + S-adenosyl-L-homocysteine + H(+). Specifically methylates the N4 position of cytidine in position 1402 (C1402) of 16S rRNA. This Dickeya chrysanthemi (strain Ech1591) (Dickeya zeae (strain Ech1591)) protein is Ribosomal RNA small subunit methyltransferase H.